The primary structure comprises 1183 residues: SRC kinase signaling inhibitor 1 (1183 aa).

The interval 1-44 (MGNAPSQDPERSSPPMLSADDAEYPREYRTLGGGGGGGSGGRRF) is disordered. Phosphoserine occurs at positions 13 and 18. The span at 31 to 41 (LGGGGGGGSGG) shows a compositional bias: gly residues. At serine 45 the chain carries Phosphoserine. Phosphothreonine is present on threonine 52. Residues serine 53, serine 64, serine 143, serine 165, serine 169, serine 179, and serine 225 each carry the phosphoserine modification. A Phosphotyrosine modification is found at tyrosine 241. Residues 284–379 (ASRESSPTRR…ERRDVKPDED (96 aa)) are disordered. Polar residues predominate over residues 286-296 (RESSPTRRLNN). Low complexity predominate over residues 297-306 (LSPAPHLASG). Residues serine 298, serine 307, and serine 324 each carry the phosphoserine modification. A compositionally biased stretch (low complexity) spans 313-331 (PSGLPSGLQSGSPSRSRLS). Residues arginine 329 and arginine 336 each carry the omega-N-methylarginine modification. Serine 343, serine 362, and serine 364 each carry phosphoserine. Residues 369-379 (LERRDVKPDED) show a composition bias toward basic and acidic residues. Phosphotyrosine is present on tyrosine 396. The segment at 466–643 (YGFRLPPSSP…ASSTPAGQPT (178 aa)) is disordered. Pro residues predominate over residues 485–497 (PGGPPPPHSPYSG). Serine 493, serine 496, and serine 500 each carry phosphoserine. At arginine 501 the chain carries Omega-N-methylarginine. Phosphoserine occurs at positions 503, 513, 515, 517, and 522. Residues 524-541 (GGKTRSAGSASTAGAPPS) are compositionally biased toward low complexity. Basic and acidic residues predominate over residues 562–574 (KDTETRERMEAME). 2 positions are modified to phosphoserine: serine 598 and serine 621. 2 positions are modified to phosphothreonine: threonine 624 and threonine 637. Positions 634–643 (ASSTPAGQPT) are enriched in low complexity. The tract at residues 647–697 (RLQMQLHLRGLQNSASDLRGQLQQLRKLQLQNQESVRALLKRTEAELSMRV) is interaction with SNAP25. Coiled coils occupy residues 654–674 (LRGL…LRKL) and 726–746 (EELI…IQRD). Phosphoserine is present on residues serine 844, serine 857, and serine 866. Disordered regions lie at residues 861-907 (EMPP…KAVS) and 949-1032 (DCAS…VTSK). Threonine 884 is modified (phosphothreonine). Serine 987 is subject to Phosphoserine. Pro residues predominate over residues 1002–1011 (KSPPPPPPRR). Serine 1043 and serine 1060 each carry phosphoserine. Disordered regions lie at residues 1058-1081 (AVSE…DEDD) and 1105-1183 (GASR…SISF). The span at 1135 to 1183 (QAQQQATKPSKEMSGSNETSSPVSEKPSASRTSIPVLTSFGARNSSISF) shows a compositional bias: polar residues.

Belongs to the SRCIN1 family. In terms of assembly, interacts with the N-terminal coiled-coil region of SNAP25. Interacts with BCAR1/p130Cas and SRC through its C-terminal domain. Interacts with CSK, CTTN, SORBS3/vinexin, SYP and MAPRE3/EB3. Tyrosine-phosphorylated in response to EGF and to cell adhesion to integrin ligands. As to expression, expressed in some primary breast carcinomas where its presence is significantly associated with increased tumor size. Not detected in normal breast tissue.

It is found in the cytoplasm. It localises to the cytoskeleton. The protein resides in the cell projection. The protein localises to the axon. Its subcellular location is the dendrite. It is found in the presynapse. It localises to the postsynapse. The protein resides in the postsynaptic density. Functionally, acts as a negative regulator of SRC by activating CSK which inhibits SRC activity and downstream signaling, leading to impaired cell spreading and migration. Regulates dendritic spine morphology. Involved in calcium-dependent exocytosis. May play a role in neurotransmitter release or synapse maintenance. The polypeptide is SRC kinase signaling inhibitor 1 (Homo sapiens (Human)).